The primary structure comprises 268 residues: Tryptophan synthase alpha chain (268 aa).

Catalysis depends on proton acceptor residues glutamate 49 and aspartate 60.

Belongs to the TrpA family. Tetramer of two alpha and two beta chains.

The enzyme catalyses (1S,2R)-1-C-(indol-3-yl)glycerol 3-phosphate + L-serine = D-glyceraldehyde 3-phosphate + L-tryptophan + H2O. Its pathway is amino-acid biosynthesis; L-tryptophan biosynthesis; L-tryptophan from chorismate: step 5/5. The alpha subunit is responsible for the aldol cleavage of indoleglycerol phosphate to indole and glyceraldehyde 3-phosphate. The polypeptide is Tryptophan synthase alpha chain (Aeromonas hydrophila subsp. hydrophila (strain ATCC 7966 / DSM 30187 / BCRC 13018 / CCUG 14551 / JCM 1027 / KCTC 2358 / NCIMB 9240 / NCTC 8049)).